The chain runs to 133 residues: Small ribosomal subunit protein uS8 (133 aa).

It belongs to the universal ribosomal protein uS8 family. As to quaternary structure, part of the 30S ribosomal subunit. Contacts proteins S5 and S12.

In terms of biological role, one of the primary rRNA binding proteins, it binds directly to 16S rRNA central domain where it helps coordinate assembly of the platform of the 30S subunit. The sequence is that of Small ribosomal subunit protein uS8 from Synechococcus sp. (strain WH7803).